The primary structure comprises 38 residues: Potassium channel toxin alpha-KTx 6.4 (38 aa).

Intrachain disulfides connect Cys6–Cys27, Cys12–Cys32, Cys16–Cys34, and Cys22–Cys37.

The protein belongs to the short scorpion toxin superfamily. Potassium channel inhibitor family. Alpha-KTx 06 subfamily. As to expression, expressed by the venom gland.

The protein localises to the secreted. In terms of biological role, potently, completely and reversibly blocks voltage-gated potassium channel Kv1.2/KCNA2 and Shaker B (Sh). Also blocks small conductance (SK) calcium-activated potassium channel (KCNN). In Pandinus imperator (Emperor scorpion), this protein is Potassium channel toxin alpha-KTx 6.4.